A 692-amino-acid chain; its full sequence is Elongation factor G (692 aa).

The region spanning 8–282 (ENTRNIGIMA…AVIDYLPSPV (275 aa)) is the tr-type G domain. Residues 17–24 (AHIDAGKT), 81–85 (DTPGH), and 135–138 (NKMD) each bind GTP.

Belongs to the TRAFAC class translation factor GTPase superfamily. Classic translation factor GTPase family. EF-G/EF-2 subfamily.

It localises to the cytoplasm. Catalyzes the GTP-dependent ribosomal translocation step during translation elongation. During this step, the ribosome changes from the pre-translocational (PRE) to the post-translocational (POST) state as the newly formed A-site-bound peptidyl-tRNA and P-site-bound deacylated tRNA move to the P and E sites, respectively. Catalyzes the coordinated movement of the two tRNA molecules, the mRNA and conformational changes in the ribosome. The polypeptide is Elongation factor G (Lysinibacillus sphaericus (strain C3-41)).